We begin with the raw amino-acid sequence, 406 residues long: MTMNLINKKNLNIYLCGPTVYSDVHIGNLRTIIIFDAIFECLKNKGFSINFLHNITDIDDKIIEKAQELGISEAELTEKYTNEYFKILEIFNIKKPTKIVKVTEKIEKIIEYIKLLEKKGFTYYNKNNDLVFDILKIPNYGIISGQKIESLLDKNTKKTKSKNDFVLWKKTQKGLFFKSLFGLGRPGWHTECAALIYDYFQKKSLDLHGGGVDLIFPHHENENAQHFALTGNPIAENWFRSGFVNLNGKKMAKSLNNVLLAKNFSHKYNPDIIRSIFLSINPTVPINLTEELIKNHKKLIEKYQKICFEWYFDKKNEKTEKVEQVLNLFIEGKFAKANFLIMELIKQKENSTIRKIFLNLRFNFTKMRLDPESQEKIKNWNKLIMDKNYSEADKIREELWKIFKNS.

Cysteine 16 provides a ligand contact to Zn(2+). Residues 18–28 carry the 'HIGH' region motif; it reads PTVYSDVHIGN. Cysteine 192, histidine 218, and glutamate 222 together coordinate Zn(2+). The 'KMSKS' region signature appears at 250–254; sequence KMAKS. ATP is bound at residue lysine 253.

This sequence belongs to the class-I aminoacyl-tRNA synthetase family. In terms of assembly, monomer. Zn(2+) is required as a cofactor.

Its subcellular location is the cytoplasm. The catalysed reaction is tRNA(Cys) + L-cysteine + ATP = L-cysteinyl-tRNA(Cys) + AMP + diphosphate. This is Cysteine--tRNA ligase from Mesomycoplasma hyopneumoniae (strain J / ATCC 25934 / NCTC 10110) (Mycoplasma hyopneumoniae).